The primary structure comprises 251 residues: Phosphate import ATP-binding protein PstB (251 aa).

The ABC transporter domain maps to 5-246 (MNSKDVNFWY…PENKKTEDYI (242 aa)). 37–44 (GPSGCGKS) serves as a coordination point for ATP.

Belongs to the ABC transporter superfamily. Phosphate importer (TC 3.A.1.7) family. As to quaternary structure, the complex is composed of two ATP-binding proteins (PstB), two transmembrane proteins (PstC and PstA) and a solute-binding protein (PstS).

It localises to the cell membrane. The enzyme catalyses phosphate(out) + ATP + H2O = ADP + 2 phosphate(in) + H(+). Its function is as follows. Part of the ABC transporter complex PstSACB involved in phosphate import. Responsible for energy coupling to the transport system. This chain is Phosphate import ATP-binding protein PstB, found in Methanococcus maripaludis (strain DSM 14266 / JCM 13030 / NBRC 101832 / S2 / LL).